We begin with the raw amino-acid sequence, 348 residues long: Hereditary hemochromatosis protein homolog (348 aa).

The signal sequence occupies residues 1 to 22 (MGPRARPALFFLILLRTVAAQG). Residues 23 to 114 (RPPRSHSLRY…IMDNHNHSKE (92 aa)) are alpha-1. Residues 23–306 (RPPRSHSLRY…WEPSLSNTLV (284 aa)) lie on the Extracellular side of the membrane. Residues asparagine 110, asparagine 130, and asparagine 234 are each glycosylated (N-linked (GlcNAc...) asparagine). The tract at residues 115 to 205 (SHTLQVILGC…ELGRGVLDQQ (91 aa)) is alpha-2. 2 disulfide bridges follow: cysteine 124–cysteine 187 and cysteine 225–cysteine 282. The tract at residues 206–297 (VPPLVKVTHH…GLDQPLTATW (92 aa)) is alpha-3. An Ig-like C1-type domain is found at 207-296 (PPLVKVTHHV…PGLDQPLTAT (90 aa)). A connecting peptide region spans residues 298 to 306 (EPSLSNTLV). The chain crosses the membrane as a helical span at residues 307-330 (TGVISGIAVCVIIFLIGILFRILR). Over 331–348 (KRQASRGAMGDYVLAECE) the chain is Cytoplasmic.

It belongs to the MHC class I family. In terms of assembly, binds TFR through the extracellular domain in a pH-dependent manner.

It is found in the cell membrane. Functionally, binds to transferrin receptor (TFR) and reduces its affinity for iron-loaded transferrin. The sequence is that of Hereditary hemochromatosis protein homolog (HFE) from Rhinoceros unicornis (Greater Indian rhinoceros).